Reading from the N-terminus, the 1113-residue chain is Protein translocase subunit SecA (1113 aa).

ATP is bound by residues glutamine 175, 193 to 197, and aspartate 694; that span reads GEGKT. Over residues 1042–1072 the composition is skewed to basic and acidic residues; sequence RHAAEQRTDMSKYRTQKDDIEAQQKAQRDAA. The disordered stretch occupies residues 1042–1113; that stretch reads RHAAEQRTDM…KFKQCHGRNL (72 aa). 4 residues coordinate Zn(2+): cysteine 1097, cysteine 1099, cysteine 1108, and histidine 1109. Residues 1103–1113 are compositionally biased toward basic residues; the sequence is KKFKQCHGRNL.

This sequence belongs to the SecA family. In terms of assembly, monomer and homodimer. Part of the essential Sec protein translocation apparatus which comprises SecA, SecYEG and auxiliary proteins SecDF. Other proteins may also be involved. It depends on Zn(2+) as a cofactor.

The protein localises to the cell inner membrane. It localises to the cytoplasm. The catalysed reaction is ATP + H2O + cellular proteinSide 1 = ADP + phosphate + cellular proteinSide 2.. Functionally, part of the Sec protein translocase complex. Interacts with the SecYEG preprotein conducting channel. Has a central role in coupling the hydrolysis of ATP to the transfer of proteins into and across the cell membrane, serving as an ATP-driven molecular motor driving the stepwise translocation of polypeptide chains across the membrane. This chain is Protein translocase subunit SecA, found in Porphyromonas gingivalis (strain ATCC 33277 / DSM 20709 / CIP 103683 / JCM 12257 / NCTC 11834 / 2561).